The chain runs to 579 residues: Vitamin B6 transporter TPN1 (579 aa).

Helical transmembrane passes span 99–119 (TGGL…GLSF), 123–143 (LASS…CSIM), 158–178 (LFGW…VMGW), 199–219 (PLWV…IFGI), 222–242 (VIKV…LLYI), 275–295 (LCYS…ILFP), 303–323 (IFCL…ILGL), 363–383 (VVVL…SAAF), 395–415 (IPRW…ALIG), 422–442 (ILGN…ILLF), 520–540 (FAFI…YWIG), and 546–566 (FGEY…GVVY).

Belongs to the purine-cytosine permease (2.A.39) family.

Its subcellular location is the membrane. Its function is as follows. Thiamine-regulated, high affinity import carrier of pyridoxine, pyridoxal and pyridoxamine. This chain is Vitamin B6 transporter TPN1 (TPN1), found in Saccharomyces cerevisiae (Baker's yeast).